Reading from the N-terminus, the 200-residue chain is Putative hydrolase MhqD (200 aa).

Residues Ser100, Asp150, and His181 each act as charge relay system in the active site.

It belongs to the AB hydrolase superfamily. AB hydrolase 2 family.

It is found in the cytoplasm. Its function is as follows. Putative hydrolase that may contribute to the degradation of aromatic compounds. In Bacillus subtilis (strain 168), this protein is Putative hydrolase MhqD (mhqD).